Reading from the N-terminus, the 389-residue chain is Phospho-N-acetylmuramoyl-pentapeptide-transferase (389 aa).

Transmembrane regions (helical) follow at residues 25–45, 74–94, 97–117, 134–154, 167–187, 190–210, 222–242, 259–279, 286–306, 311–331, and 366–386; these read RAVMANVTALVIGLGFGPWVI, MGGVLVLISIAISTLLWCDWG, FIWVVLLVTLGYGAIGWVDDY, FFWQTLIGLVAAVYLAFSVSE, WIEGGMFADVPYKMNLIVPFF, VSYPLGVTGFIVLTYLVIVGS, GLVIMPVVLVGGGLGVFAYVM, AGELLIFCSAMAGAGLAFLWF, VFMGDVGALALGGALGTVAVI, IVLFVMGGIFVVETLSVMLQV, and QVTVRFWIITMLLVLIGLSSL.

The protein belongs to the glycosyltransferase 4 family. MraY subfamily. Mg(2+) serves as cofactor.

Its subcellular location is the cell inner membrane. The catalysed reaction is UDP-N-acetyl-alpha-D-muramoyl-L-alanyl-gamma-D-glutamyl-meso-2,6-diaminopimeloyl-D-alanyl-D-alanine + di-trans,octa-cis-undecaprenyl phosphate = di-trans,octa-cis-undecaprenyl diphospho-N-acetyl-alpha-D-muramoyl-L-alanyl-D-glutamyl-meso-2,6-diaminopimeloyl-D-alanyl-D-alanine + UMP. It participates in cell wall biogenesis; peptidoglycan biosynthesis. Catalyzes the initial step of the lipid cycle reactions in the biosynthesis of the cell wall peptidoglycan: transfers peptidoglycan precursor phospho-MurNAc-pentapeptide from UDP-MurNAc-pentapeptide onto the lipid carrier undecaprenyl phosphate, yielding undecaprenyl-pyrophosphoryl-MurNAc-pentapeptide, known as lipid I. The polypeptide is Phospho-N-acetylmuramoyl-pentapeptide-transferase (Cupriavidus metallidurans (strain ATCC 43123 / DSM 2839 / NBRC 102507 / CH34) (Ralstonia metallidurans)).